Reading from the N-terminus, the 313-residue chain is Porphobilinogen deaminase (313 aa).

An S-(dipyrrolylmethanemethyl)cysteine modification is found at C242.

It belongs to the HMBS family. Monomer. Dipyrromethane is required as a cofactor.

The enzyme catalyses 4 porphobilinogen + H2O = hydroxymethylbilane + 4 NH4(+). It participates in porphyrin-containing compound metabolism; protoporphyrin-IX biosynthesis; coproporphyrinogen-III from 5-aminolevulinate: step 2/4. In terms of biological role, tetrapolymerization of the monopyrrole PBG into the hydroxymethylbilane pre-uroporphyrinogen in several discrete steps. The sequence is that of Porphobilinogen deaminase from Salmonella dublin (strain CT_02021853).